The following is a 401-amino-acid chain: L-rhamnonate dehydratase (401 aa).

Residues His-29 and Arg-55 each contribute to the substrate site. The Mg(2+) site is built by Asp-222, Glu-248, and Glu-276. Catalysis depends on His-325, which acts as the Proton acceptor. Substrate is bound at residue Glu-345.

The protein belongs to the mandelate racemase/muconate lactonizing enzyme family. RhamD subfamily. As to quaternary structure, homooctamer; tetramer of dimers. Mg(2+) is required as a cofactor.

The enzyme catalyses L-rhamnonate = 2-dehydro-3-deoxy-L-rhamnonate + H2O. Catalyzes the dehydration of L-rhamnonate to 2-keto-3-deoxy-L-rhamnonate (KDR). Can also dehydrate L-lyxonate, L-mannonate and D-gulonate, although less efficiently, but not 2-keto-4-hydroxyheptane-1,7-dioate. The polypeptide is L-rhamnonate dehydratase (rhmD) (Escherichia coli (strain K12)).